Here is a 497-residue protein sequence, read N- to C-terminus: C4-dicarboxylate transport protein (497 aa).

A run of 8 helical transmembrane segments spans residues 27–45 (LYVQVLAAIAVGILLGYFY), 60–82 (IMLVKMIIAPVIFLTVATGIAGM), 95–117 (AMIYFLTFSTLALLVGLVVANVV), 168–185 (ILQVLFISVLFGISLAIV), 205–227 (RLVAILMKAAPIGAFGAMAFTIG), 237–259 (LAMLIGTFYLTSFLFVFMVLGAV), 348–370 (ILLLLIAMLSSKGAAGITGAGFI), and 374–393 (ATLSAVPSVPVAGMALILGI). The disordered stretch occupies residues 466 to 497 (ADRTLAGRPGGRDSRRIAPDHSAQVFGGPLSL). Residues 475–484 (GGRDSRRIAP) are compositionally biased toward basic and acidic residues.

The protein belongs to the dicarboxylate/amino acid:cation symporter (DAACS) (TC 2.A.23) family.

It is found in the cell inner membrane. In terms of biological role, responsible for the transport of dicarboxylates such as succinate, fumarate, and malate from the periplasm across the inner membrane. This transport system plays an essential role in the energy supply of tropical rhizobium-legume symbionts. This is C4-dicarboxylate transport protein (dctA1) from Sinorhizobium fredii (strain NBRC 101917 / NGR234).